The chain runs to 448 residues: Probable metal transport system membrane protein CPn_0347/CP_0413/CPj0347/CpB0354 (448 aa).

Transmembrane regions (helical) follow at residues 15–35, 47–67, 69–89, 100–120, 144–164, 193–213, 233–253, and 270–290; these read FLAV…LLIS, ASYP…SLQA, IFWI…IIVF, SALC…ASYV, FLEA…LWWW, LIFI…VLIS, ILIL…YISV, and LPTG…CLLF.

This sequence belongs to the ABC-3 integral membrane protein family.

It is found in the cell inner membrane. In terms of biological role, part of an ATP-driven transport system CPn_0346/CPn_0347/CPn_0348/CPn_0349 for a metal. This Chlamydia pneumoniae (Chlamydophila pneumoniae) protein is Probable metal transport system membrane protein CPn_0347/CP_0413/CPj0347/CpB0354.